The following is a 142-amino-acid chain: Type IV pilus subunit protein TapA (142 aa).

A propeptide spans 1 to 6 (MKKQSG) (leader sequence). F7 carries the N-methylphenylalanine modification. The chain crosses the membrane as a helical span at residues 7–27 (FTLIELMIVVAIVAILAAIAL).

Belongs to the N-Me-Phe pilin family.

Its subcellular location is the membrane. In terms of biological role, major component of the type IV (TAP) pilus. Aeromonas hydrophila possesses two distinct families of type IV pili: the bundle-forming pilus (Bfp) and the type IV pilus (Tap). The chain is Type IV pilus subunit protein TapA (tapA) from Aeromonas hydrophila.